We begin with the raw amino-acid sequence, 145 residues long: NADH-quinone oxidoreductase subunit A 1 (145 aa).

3 helical membrane-spanning segments follow: residues 18-38 (ILPL…LLLA), 71-91 (VPFY…VFIF), and 104-124 (GLIH…WLWL).

Belongs to the complex I subunit 3 family. NDH-1 is composed of 14 different subunits. Subunits NuoA, H, J, K, L, M, N constitute the membrane sector of the complex.

It localises to the cell inner membrane. It carries out the reaction a quinone + NADH + 5 H(+)(in) = a quinol + NAD(+) + 4 H(+)(out). In terms of biological role, NDH-1 shuttles electrons from NADH, via FMN and iron-sulfur (Fe-S) centers, to quinones in the respiratory chain. The immediate electron acceptor for the enzyme in this species is believed to be ubiquinone. Couples the redox reaction to proton translocation (for every two electrons transferred, four hydrogen ions are translocated across the cytoplasmic membrane), and thus conserves the redox energy in a proton gradient. This is NADH-quinone oxidoreductase subunit A 1 from Geotalea uraniireducens (strain Rf4) (Geobacter uraniireducens).